Consider the following 92-residue polypeptide: UPF0297 protein TTE1249 (92 aa).

Belongs to the UPF0297 family.

This Caldanaerobacter subterraneus subsp. tengcongensis (strain DSM 15242 / JCM 11007 / NBRC 100824 / MB4) (Thermoanaerobacter tengcongensis) protein is UPF0297 protein TTE1249.